The sequence spans 530 residues: Phosphoenolpyruvate carboxykinase (ATP) (530 aa).

The substrate site is built by arginine 58, tyrosine 195, and lysine 201. Residues lysine 201, histidine 220, and 236–244 (GLSGTGKTT) each bind ATP. Residues lysine 201 and histidine 220 each contribute to the Mn(2+) site. Aspartate 257 is a binding site for Mn(2+). Residues glutamate 285, arginine 321, 440–441 (RI), and threonine 446 contribute to the ATP site. Position 321 (arginine 321) interacts with substrate.

It belongs to the phosphoenolpyruvate carboxykinase (ATP) family. The cofactor is Mn(2+).

The protein localises to the cytoplasm. It carries out the reaction oxaloacetate + ATP = phosphoenolpyruvate + ADP + CO2. It participates in carbohydrate biosynthesis; gluconeogenesis. Involved in the gluconeogenesis. Catalyzes the conversion of oxaloacetate (OAA) to phosphoenolpyruvate (PEP) through direct phosphoryl transfer between the nucleoside triphosphate and OAA. The protein is Phosphoenolpyruvate carboxykinase (ATP) of Staphylococcus aureus (strain Mu3 / ATCC 700698).